A 454-amino-acid chain; its full sequence is MTNSSKGRHVAVLPFPFSTHAAPILSIIRRLASAAPDVTFSFFSTPQSIQTLFPSENPENNIRPHAISDGVPEGFVFSGKHHEDINLFLAAGKESFEAGMKAAEAETGRRIDCVVSDAFMWFSCELAEEMGVPWVTLWVSGACSLAAHCYTDLIRETVGMHDTAGREDEIVKFVPGFSEVRLGDLPSGVVYGNLESPFSMMLYKMGQVLHKAAAVAINSFDELEPEPVKVLASKLKLLTCGPFNPISPPPSSNLDEYGCIPWLDRRKAASVAYIGFGTVATPPPVELAALAEALEASSTPFLWSLRDNPKQHLPEGFLKRTSELQKIVPWAPQAQVLAHRSVGVFINHCGWNSVVESVEAGVPIIGRPFFGDHQVDAWMVENVWKIGVRVEGAVFTKGITMSALELVLSHDQKQKELREQVGKYKEFALKAFGPKQRSTCNLSTLLEIVAGYNL.

The first 21 residues, 1–21 (MTNSSKGRHVAVLPFPFSTHA), serve as a signal peptide directing secretion. The an anthocyanidin site is built by Ser18 and His20. The active-site Proton acceptor is the His20. Asp117 functions as the Charge relay in the catalytic mechanism. His148 lines the an anthocyanidin pocket. UDP-alpha-D-glucose is bound by residues Ala331, Gln333, His348, Trp351, Asn352, Ser353, and Glu356. An anthocyanidin is bound at residue Gly371. Asp372 is a UDP-alpha-D-glucose binding site. The N-linked (GlcNAc...) asparagine glycan is linked to Asn441.

The protein belongs to the UDP-glycosyltransferase family. In terms of assembly, monomer. Mostly expressed in leaves and flowers and, to a lower extent, in roots. In flowers, mainly observed in petals, stamens and scapes, and at lower levels in pistils and toruses.

The enzyme catalyses cyanidin + UDP-alpha-D-galactose = cyanidin 3-O-beta-D-galactoside + UDP + H(+). The catalysed reaction is cyanidin + UDP-alpha-D-glucose = cyanidin 3-O-beta-D-glucoside + UDP + H(+). It catalyses the reaction delphinidin + UDP-alpha-D-glucose = delphinidin 3-O-beta-D-glucoside + UDP. It carries out the reaction peonidin + UDP-alpha-D-glucose = peonidin 3-O-beta-D-glucoside + UDP. The enzyme catalyses pelargonidin + UDP-alpha-D-glucose = pelargonidin 3-O-beta-D-glucoside + UDP. The catalysed reaction is delphinidin + UDP-alpha-D-galactose = delphinidin 3-O-beta-D-galactoside + UDP + H(+). It catalyses the reaction pelargonidin + UDP-alpha-D-galactose = pelargonidin 3-O-beta-D-galactoside betaine + UDP. It carries out the reaction peonidin + UDP-alpha-D-galactose = peonidin 3-O-beta-D-galactoside + UDP. The enzyme catalyses petunidin + UDP-alpha-D-galactose = petunidin 3-O-beta-D-galactoside + UDP. The catalysed reaction is petunidin + UDP-alpha-D-glucose = petunidin 3-O-beta-D-glucoside + UDP. It catalyses the reaction an anthocyanidin + UDP-alpha-D-glucose + H(+) = an anthocyanidin 3-O-beta-D-glucoside + UDP. It carries out the reaction an anthocyanidin + UDP-alpha-D-galactose = an anthocyanidin 3-O-beta-D-galactoside + UDP. The protein operates within pigment biosynthesis; anthocyanin biosynthesis. Flavonoid 3-O-glycosyltransferase involved in the biosynthesis of anthocyanins conferring flower red/pink colors, mainly anthocyanidin 3-O-glycosides. Catalyzes the addition of UDP-sugar to the 3-OH of anthocyanidin, with a preference for UDP-galactose (UDP-Gal) as sugar donor and cyanidin as substrate; able to use delphinidin, pelargonidin, peonidin and petunidin as substrates in the presence of UDP-Gal, but barely active on malvidin. Can also use UDP-glucose (UDP-Glu) as sugar donor with cyanidin, delphinidin, pelargonidin, peonidin and petunidin as substrates, but not active on malvidin. The polypeptide is Anthocyanidin 3-O-galactosyltransferase 3GT6 (Rhododendron delavayi (Rhododendron)).